A 186-amino-acid polypeptide reads, in one-letter code: Elongation factor P (186 aa).

This sequence belongs to the elongation factor P family.

The protein localises to the cytoplasm. The protein operates within protein biosynthesis; polypeptide chain elongation. Involved in peptide bond synthesis. Stimulates efficient translation and peptide-bond synthesis on native or reconstituted 70S ribosomes in vitro. Probably functions indirectly by altering the affinity of the ribosome for aminoacyl-tRNA, thus increasing their reactivity as acceptors for peptidyl transferase. The polypeptide is Elongation factor P (Shewanella loihica (strain ATCC BAA-1088 / PV-4)).